The chain runs to 379 residues: Cyclic di-GMP phosphodiesterase PdeB (379 aa).

One can recognise an HD-GYP domain in the interval 114-310 (FYKKQKKIFI…PLDFIVELND (197 aa)).

Mn(2+) serves as cofactor.

The catalysed reaction is 3',3'-c-di-GMP + 2 H2O = 2 GMP + 2 H(+). In terms of biological role, phosphodiesterase (PDE) that catalyzes the hydrolysis of cyclic diguanylate (c-di-GMP) to GMP. The protein is Cyclic di-GMP phosphodiesterase PdeB of Borreliella burgdorferi (strain ATCC 35210 / DSM 4680 / CIP 102532 / B31) (Borrelia burgdorferi).